A 595-amino-acid polypeptide reads, in one-letter code: MRSALSNRTPRRFRSRDWFDNPDHIDMTALYLERFMNYGITPEELRSGKPIIGIAQTGSDISPCNRIHLDLVQRVRDGIRDAGGIPMEFPVHPIFENCRRPTAALDRNLSYLGLVETLHGYPIDAVVLTTGCDKTTPAGIMAATTVNIPAIVLSGGPMLDGWHENELVGSGTVIWRSRRKLAAGEITEEEFIDRAASSAPSAGHCNTMGTASTMNAVAEALGLSLTGCAAIPAPYRERGQMAYKTGQRIVDLAYDDVKPLDILTKQAFENAIALVAAAGGSTNAQPHIVAMARHAGVEITADDWRAAYDIPLIVNMQPAGKYLGERFHRAGGAPAVLWELLQQGRLHGDVLTVTGKTMSENLQGRETSDREVIFPYHEPLAEKAGFLVLKGNLFDFAIMKSSVIGEEFRKRYLSQPGQEGVFEARAIVFDGSDDYHKRINDPALEIDERCILVIRGAGPIGWPGSAEVVNMQPPDHLLKKGIMSLPTLGDGRQSGTADSPSILNASPESAIGGGLSWLRTGDTIRIDLNTGRCDALVDEATIAARKQDGIPAVPATMTPWQEIYRAHASQLDTGGVLEFAVKYQDLAAKLPRHNH.

Cysteine 64 is a [2Fe-2S] cluster binding site. Glutamate 96 is a Mg(2+) binding site. Cysteine 132 serves as a coordination point for [2Fe-2S] cluster. Aspartate 133 provides a ligand contact to Mg(2+). Cysteine 205 provides a ligand contact to [2Fe-2S] cluster. Glutamate 467 contributes to the Mg(2+) binding site.

The protein belongs to the IlvD/Edd family. In terms of assembly, homotetramer. [2Fe-2S] cluster serves as cofactor. Requires Mg(2+) as cofactor.

It catalyses the reaction D-xylonate = 2-dehydro-3-deoxy-D-arabinonate + H2O. The enzyme catalyses D-gluconate = 2-dehydro-3-deoxy-D-gluconate + H2O. It participates in carbohydrate metabolism; D-xylose degradation. In terms of biological role, catalyzes the dehydration of D-xylonate to 2-dehydro-3-deoxy-D-arabinonate during D-xylose degradation. Can also dehydrate D-gluconate, with similar catalytic efficiency. Has weak activity with D-galactonate, D-fuconate and L-arabinonate. The protein is D-xylonate dehydratase of Caulobacter vibrioides (strain ATCC 19089 / CIP 103742 / CB 15) (Caulobacter crescentus).